The sequence spans 81 residues: Short neurotoxin 1 (81 aa).

The first 21 residues, Met1 to Thr21, serve as a signal peptide directing secretion. 4 cysteine pairs are disulfide-bonded: Cys24–Cys43, Cys38–Cys60, Cys62–Cys73, and Cys74–Cys79.

This sequence belongs to the three-finger toxin family. Short-chain subfamily. Type I alpha-neurotoxin sub-subfamily. Expressed by the venom gland.

The protein resides in the secreted. In terms of biological role, binds to muscle nicotinic acetylcholine receptor (nAChR) and inhibit acetylcholine from binding to the receptor, thereby impairing neuromuscular transmission. This chain is Short neurotoxin 1, found in Austrelaps superbus (Lowland copperhead snake).